The primary structure comprises 497 residues: ATP synthase subunit alpha 2 (497 aa).

167 to 174 serves as a coordination point for ATP; that stretch reads GERATGKT.

This sequence belongs to the ATPase alpha/beta chains family. F-type ATPases have 2 components, CF(1) - the catalytic core - and CF(0) - the membrane proton channel. CF(1) has five subunits: alpha(3), beta(3), gamma(1), delta(1), epsilon(1). CF(0) has four main subunits: a(1), b(1), b'(1) and c(9-12).

It localises to the cell inner membrane. The catalysed reaction is ATP + H2O + 4 H(+)(in) = ADP + phosphate + 5 H(+)(out). Its function is as follows. Produces ATP from ADP in the presence of a proton gradient across the membrane. The alpha chain is a regulatory subunit. This is ATP synthase subunit alpha 2 from Cereibacter sphaeroides (strain ATCC 17029 / ATH 2.4.9) (Rhodobacter sphaeroides).